Here is a 148-residue protein sequence, read N- to C-terminus: Cystatin-D (148 aa).

A signal peptide spans 1–33 (MASLLSPSMPVLAAVALTLTLAVIPEASTNAEA). One can recognise a Cystatin kininogen-type domain in the interval 36-148 (VVLGGVEPAD…SMTNFNCYNF (113 aa)). 2 cysteine pairs are disulfide-bonded: Cys101-Cys111 and Cys125-Cys145.

Belongs to the cystatin family. As to expression, in cartilage, expressed mainly in mature chondrocytes including prehypertrophic and hypertrophic cells (at protein level). Expressed exclusively in cartilage.

Its subcellular location is the cytoplasm. The protein localises to the cytosol. Its function is as follows. May play a role in the last steps of the chondrocyte differentiation pathway as an inducer of maturation. Induces chondrocyte calcification during endochondral ossification by playing a role in the transcriptional inhibition of ENPP1, a generator of pyrophosphate which inhibits calcification. Possibly impairs the binding of a transcription factor to the ENPP1 promoter. Unlike other cystatins, does not have thiol protease inhibitor activity. The protein is Cystatin-D of Mus musculus (Mouse).